The chain runs to 938 residues: MSDYKSTLNLPETGFPMRGDLAKREPGMLARWTDDDLYGIIRAAKKGKKTFILHDGPPYANGSIHIGHSVNKILKDIIVKSKGLSGYDSPYVPGWDCHGLPIELKVEQEYGKPGEKFTAAEFRAKCREYAATQVDGQRKDFIRLGVLGDWSHPYLTMDFKTEANIIRALGKIIGNGHLHKGAKPVHWCVDCRSALAEAEVEYYDKTSPSIDVAFQAVDQDALKAKFGVSNVNGPISLVIWTTTPWTLPANRAISIAPDFDYALVQIDGQAVILAKDLVESVMQRIGVTDYTILGTVKGAELELLRFTHPFMGFDVPAILGDHVTLDAGTGAVHTAPGHGPDDYVIGQKYGLETANPVGPDGTYLPGTYPTLDGVNVFKANDIVVALLQEKGALLHVEKMQHSYPCCWRHKTPIIFRATPQWFVSMDQKGLRAQSLKEIKGVQWLPDWGQARIESMVANRPDWCISRQRTWGVPMSLFVHKDTEELHPRTLELMEEVAKRVEVDGIQAWWDLDAKEILGDEADQYVKVPDTLDVWFDSGSTHSSVVDVRPEFAGHAADMYLEGSDQHRGWFMSSLMISTAMKGKAPYRQVLTHGFTVDGQGRKMSKSIGNTVSPQDVMNKLGADILRLWVASTDYTGEMAVSDEILKRAADSYRRIRNTARFLLANLNGFDPAKDMVKPEEMVVLDRWAVGCAKAAQEDILKAYEAYDFHEVVQRLMRFCSVEMGSFYLDIIKDRQYTAKADSVARRSCQTALYHIAEALVRWMAPILSFTADEVWGYLPGEREKYVFTGEWYEGLFGLADSEAMNDAFWDELLKVRGEVNKVIEQARADKKVGGSLEAAVTLYAEPELAAKLTALGDELRFVLLTSGATVADYNDAPADAQQSEVLKGLKVALSKAEGEKCPRCWHYTQDVGKVAEHAEICGRCVSNVAGDGEKRKFA.

Positions 58–68 (PYANGSIHIGH) match the 'HIGH' region motif. N6-acetyllysine is present on Lys-183. L-isoleucyl-5'-AMP is bound at residue Glu-561. The 'KMSKS' region signature appears at 602–606 (KMSKS). Residue Lys-605 participates in ATP binding. Residues Cys-901, Cys-904, Cys-921, and Cys-924 each contribute to the Zn(2+) site.

It belongs to the class-I aminoacyl-tRNA synthetase family. IleS type 1 subfamily. Monomer. It depends on Zn(2+) as a cofactor.

It localises to the cytoplasm. The catalysed reaction is tRNA(Ile) + L-isoleucine + ATP = L-isoleucyl-tRNA(Ile) + AMP + diphosphate. Functionally, catalyzes the attachment of isoleucine to tRNA(Ile). As IleRS can inadvertently accommodate and process structurally similar amino acids such as valine, to avoid such errors it has two additional distinct tRNA(Ile)-dependent editing activities. One activity is designated as 'pretransfer' editing and involves the hydrolysis of activated Val-AMP. The other activity is designated 'posttransfer' editing and involves deacylation of mischarged Val-tRNA(Ile). The chain is Isoleucine--tRNA ligase from Shigella flexneri.